Consider the following 119-residue polypeptide: uncharacterized protein (119 aa).

The protein resides in the mitochondrion. The protein localises to the nucleus. This is an uncharacterized protein from Schizosaccharomyces pombe (strain 972 / ATCC 24843) (Fission yeast).